Consider the following 1461-residue polypeptide: MADDLFDFIETEGNFSQLLAAAAAAAEEEGIASGPDGGSQGSRRRGSSGEDLLFGPGGLFSDDAAEAEAAVLAAAAGATRPPRPPSAQQQRHARRGSGEIVVLDDEDEEEDEPGSPAAGSPGRALHQGSEHGHLVLGPRSRAGSGPRPPTPAALAAAEAGAPGGPGRSSPSAASPASSSSGSSGSSGSPGPSAAPRRWSPARGDPVGEPGPAARPRTPAPPAQPAAVAAAPARRGPASPASPAAGPVSAPGGGGAPSGGGDRGRHHHQHREPLLDEPAAARRLDPRPLGARSPVSSNPNSSSSSTTTVAVEPVARGPEKDEDGLGLAGDGGAPLQRQPRRRRAGEGALRRGRGFSSSSSGGSDSDLSPARSPSAPRAPAAAAAAARRSASSSSSSSSSSSSSSSSEGEEDEGVRPGAPLARAGPPPSPPAPAAAPRPSASSASATSSSAAASPAPAPEPARPPRRKRRSTNNHLSLMADGPPPTDGPLLTPLGEPWPGSDPPADGRVRYGGAGDSREGLWDEDDVRQAAARYRAAAGPVPVFIPEMGDSRKQHEALVRLIYSGAAGEAMSWLQNPRMQAPDQRFNQFCQRRVHAPHGHGSFITGSVTPPLPHIGDAMAAQDPLWALPHAVSAVAMSRRYDRTQKTFILQSLRRAYADMAYPGRAADPRAGEATVEALCARVRAAFAAAQPGRVPRELADACVLACRGVLERLLPCPLRLPAPARAPAALGPACLEEVTAALLALRDAIPGAGPAERQQAADSVALVARTVAPLVRYSVDGARAREAAWTYAAALFAPANVAGARLAEAAARPGPAEPAPGLPPLWPEQPGLVVPAPAPAAAGAPSGLPGSGPSSPASTKSGSSTKSSSGTKSGLSGSSGYASSPAAGPDPAPERRKKKRRAPGARRPGDGEEDEGLSGSALRGDGHGHRDDEEDRGPRRKRRSLGLGPAPDPAPALVSSSSSSSSSEDDRLRRPLGPMPEHPAPDGGFRRVPAGETHTPRPSAAALAAYCPPEVARALVDQEVFPELWRPALTFDPAALAHIAARRGAAGAPLRRRAAWMRQIADPEDVRVVVLYDPLPHEELCAEPAEGAPRPAWDPRRGGLSALLAAFAHRLCTPDSHAWAGNWTGRPDIGRLNAQGVLLLSARDLGFAGAVEYLCSRLGAARRRLIVLDTIEDWPADGPAVGDYHVYVRARLDPAAQCAVRWPECRELRAAVLDSSSIVGPACFARVEASFARLHPGAEPLRLCRQDNVRYTVSTRAGPRTPVPLPPRAYRERVLPTVDGCKDMARQRSALGLGDPDFDAGAAFGHRAANRWGLGAPLRPVFVSCGRRGLAELRGPEGLPAELRAFCAAALLEPDAEAAPLVLAPGALAAAGAPPAVRWDFAPFETSVRAAAGGAVETHRPSGARGPGEDGEDSAAVEIVGFRGGDGRPRGPLGPIKVEAISDDEEAEDAGNPYLLLR.

4 disordered regions span residues 25–60 (AAEEEGIASGPDGGSQGSRRRGSSGEDLLFGPGGLF), 75–518 (AAGA…SREG), 811–1002 (RPGP…PRPS), and 1395–1461 (AGGA…LLLR). The segment covering 75–90 (AAGATRPPRPPSAQQQ) has biased composition (low complexity). Residues 102–113 (VLDDEDEEEDEP) show a composition bias toward acidic residues. Composition is skewed to low complexity over residues 167 to 197 (RSSPSAASPASSSSGSSGSSGSPGPSAAPRR) and 224 to 249 (PAAVAAAPARRGPASPASPAAGPVSA). Gly residues predominate over residues 250-260 (PGGGGAPSGGG). Positions 270 to 285 (REPLLDEPAAARRLDP) are enriched in basic and acidic residues. Composition is skewed to low complexity over residues 292-308 (SPVSSNPNSSSSSTTTV) and 353-405 (GFSS…SSSS). Pro residues predominate over residues 423 to 434 (GPPPSPPAPAAA). Residues 435–453 (PRPSASSASATSSSAAASP) are compositionally biased toward low complexity. Positions 814–826 (PAEPAPGLPPLWP) are enriched in pro residues. Low complexity predominate over residues 838 to 888 (PAAAGAPSGLPGSGPSSPASTKSGSSTKSSSGTKSGLSGSSGYASSPAAGP). Basic residues predominate over residues 894 to 903 (RRKKKRRAPG). Positions 944–965 (LGLGPAPDPAPALVSSSSSSSS) are enriched in low complexity.

This sequence belongs to the herpesviridae ICP4 family. In terms of processing, a long stretch of serine residues may be a major site of phosphorylation.

The protein resides in the host nucleus. Its function is as follows. This IE protein is a multifunctional protein capable of migrating to the nucleus, binding to DNA, trans-activating other viral genes, and autoregulating its own synthesis. The chain is Major viral transcription factor ICP4 homolog (IE) from Sus scrofa (Pig).